A 312-amino-acid chain; its full sequence is Oxidoreductase NAD-binding domain-containing protein 1 (312 aa).

The signal sequence occupies residues 1–17 (MACAAVMIPGLLRCSVG). The FAD-binding FR-type domain occupies 50 to 186 (HMERTASVLR…GGVGINPLLS (137 aa)). 178-183 (GVGINP) contacts NAD(+).

This chain is Oxidoreductase NAD-binding domain-containing protein 1 (OXNAD1), found in Homo sapiens (Human).